The following is a 247-amino-acid chain: Cell division protein ZapD (247 aa).

The protein belongs to the ZapD family. Interacts with FtsZ.

The protein localises to the cytoplasm. Functionally, cell division factor that enhances FtsZ-ring assembly. Directly interacts with FtsZ and promotes bundling of FtsZ protofilaments, with a reduction in FtsZ GTPase activity. This Shigella flexneri protein is Cell division protein ZapD.